Here is a 533-residue protein sequence, read N- to C-terminus: GDP-fucose protein O-fucosyltransferase 4 (533 aa).

Topologically, residues 1 to 20 (MSAGCTQLVWGGRLHWGASH) are cytoplasmic. A helical; Signal-anchor for type II membrane protein transmembrane segment spans residues 21–37 (LLSCLLALCALWVLAAA). Residues 38–533 (EPTEGGSANV…ETYIKRSMNH (496 aa)) are Lumenal-facing. Asparagine 148, asparagine 206, and asparagine 358 each carry an N-linked (GlcNAc...) asparagine glycan. Cysteine 429 and cysteine 432 are oxidised to a cystine. N-linked (GlcNAc...) asparagine glycosylation occurs at asparagine 511.

Belongs to the glycosyltransferase 10 family.

It localises to the endoplasmic reticulum membrane. It carries out the reaction L-threonyl-[protein] + GDP-beta-L-fucose = 3-O-(alpha-L-fucosyl)-L-threonyl-[protein] + GDP + H(+). The enzyme catalyses L-seryl-[protein] + GDP-beta-L-fucose = 3-O-(alpha-L-fucosyl)-L-seryl-[protein] + GDP + H(+). Its pathway is protein modification; protein glycosylation. Protein O-fucosyltransferase that specifically catalyzes O-fucosylation of serine or threonine residues in EMI domains of target proteins. Attaches fucose through an O-glycosidic linkage. O-fucosylation of EMI domain-containing proteins may be required for facilitating protein folding and secretion. This chain is GDP-fucose protein O-fucosyltransferase 4 (fut11), found in Xenopus tropicalis (Western clawed frog).